We begin with the raw amino-acid sequence, 363 residues long: MSGIPGLAGMSSMSPYSAYAALTQHTGVSSGSSPFGSQYCSSVNDFNPYSDPRGSNTWYGMAASANASNDPRMTMSRLMGSAAAAASSSMSAYSGIPTNFHQGMHSAMGMASLGAATYDHQKAAMQFNNMSQRRKRRILFSQAQIYELERRFKQQKYLSAPEREHLANLINLTPTQVKIWFQNHRYKCKRSQKDKEKEQQKEKSYHLKKNIVDDKERSPNKQICNASSSDRSTPEEPVAKAKESGLDFSNHKIDNLNLKMEADLEPKSSLYSIIPPYLTNSYAQQTQSEAQTSPIINNVLGSNLFPERKSTPTMGPLTSYSFGQSMDSISSFYSPDFSLYNCAHPYMAASSSYFMNAASRPWN.

The segment at residues 133–192 (RRKRRILFSQAQIYELERRFKQQKYLSAPEREHLANLINLTPTQVKIWFQNHRYKCKRSQ) is a DNA-binding region (homeobox). Positions 189–246 (KRSQKDKEKEQQKEKSYHLKKNIVDDKERSPNKQICNASSSDRSTPEEPVAKAKESGL) are disordered. Over residues 191 to 219 (SQKDKEKEQQKEKSYHLKKNIVDDKERSP) the composition is skewed to basic and acidic residues. A compositionally biased stretch (polar residues) spans 220–231 (NKQICNASSSDR). Residues 232–246 (STPEEPVAKAKESGL) are compositionally biased toward basic and acidic residues.

The protein belongs to the NK-2 homeobox family. Intestine and unidentified peripheral parenchymal cells. Slightly higher levels in the cephalic region compared to other body regions.

The protein resides in the nucleus. Functionally, this protein might be involved in determination and/or differentiation of nerve cells in the continuous replacement of neurons in the cephalic region. The polypeptide is Homeobox protein DTH-2 (DTH-2) (Girardia tigrina (Planarian)).